The primary structure comprises 202 residues: Alcohol dehydrogenase-related 31 kDa protein (202 aa).

NAD(+) is bound at residue 11–34 (YVADCGGIALETSKVLMTKNIAKL). Serine 139 contacts substrate. Tyrosine 152 serves as the catalytic Proton acceptor.

This sequence belongs to the short-chain dehydrogenases/reductases (SDR) family.

This Drosophila erecta (Fruit fly) protein is Alcohol dehydrogenase-related 31 kDa protein (Adhr).